A 569-amino-acid chain; its full sequence is Phosphoglucomutase 2 (569 aa).

Residues 1–23 (MSFQIETVPTKPYEDQKPGTSGL) form a disordered region. S2 is modified (N-acetylserine). R24 contacts alpha-D-glucose 1,6-bisphosphate. Phosphothreonine is present on residues T111 and T117. Position 119 (S119) interacts with alpha-D-glucose 1,6-bisphosphate. Residue S119 is the Phosphoserine intermediate of the active site. 4 residues coordinate Mg(2+): S119, D290, D292, and D294. The residue at position 119 (S119) is a Phosphoserine. Alpha-D-glucose 1,6-bisphosphate contacts are provided by D294, R295, T359, E378, S380, and K391.

It belongs to the phosphohexose mutase family. As to quaternary structure, monomer. Requires Mg(2+) as cofactor. Zn(2+) is required as a cofactor. O-glycosylated with mannose residues. Substrate of UDP-glucose--glycoprotein glucose phosphotransferase, linking glucose in a phosphodiester linkage to O-linked mannose.

The protein localises to the cytoplasm. It catalyses the reaction alpha-D-glucose 1-phosphate = alpha-D-glucose 6-phosphate. The enzyme catalyses O-phospho-L-seryl-[protein] + alpha-D-glucose 1-phosphate = alpha-D-glucose 1,6-bisphosphate + L-seryl-[protein]. The catalysed reaction is alpha-D-glucose 1,6-bisphosphate + L-seryl-[protein] = O-phospho-L-seryl-[protein] + alpha-D-glucose 6-phosphate. Its function is as follows. Major phosphoglucomutase isozyme that catalyzes the reversible isomerization of alpha-D-glucose 1-phosphate to alpha-D-glucose 6-phosphate. The mechanism proceeds via the intermediate compound alpha-D-glucose 1,6-bisphosphate. Constitutes about 80-90% of the phosphoglucomutase activity in the cell. Key enzyme in hexose metabolism. The forward reaction is an essential step in the energy metabolism of galactose since the product of the galactose pathway enzymes in yeast is glucose 1-phosphate. The reverse reaction is an essential step for biosynthesis when carbon sources other than galactose are the energy source because glucose 1-phosphate is the starting point for the synthesis of UDP-glucose, which acts as a precursor for the synthesis of oligosaccharides and trehalose. In Saccharomyces cerevisiae (strain ATCC 204508 / S288c) (Baker's yeast), this protein is Phosphoglucomutase 2.